The chain runs to 386 residues: Acyl-[acyl-carrier-protein] dehydrogenase MbtN (386 aa).

This sequence belongs to the acyl-CoA dehydrogenase family. Requires FAD as cofactor.

Its pathway is siderophore biosynthesis; mycobactin biosynthesis. Its function is as follows. Catalyzes the dehydrogenation at the alpha-beta position of ACP-bound acyl chains. This results in the introduction of a double bond in the lipidic chain, which is further transferred to the epsilon-amino group of lysine residue in the mycobactin core by MbtK. This is Acyl-[acyl-carrier-protein] dehydrogenase MbtN (mbtN) from Mycobacterium bovis (strain ATCC BAA-935 / AF2122/97).